The following is a 225-amino-acid chain: Imidazoleglycerol-phosphate dehydratase (225 aa).

Belongs to the imidazoleglycerol-phosphate dehydratase family.

The catalysed reaction is D-erythro-1-(imidazol-4-yl)glycerol 3-phosphate = 3-(imidazol-4-yl)-2-oxopropyl phosphate + H2O. Its pathway is amino-acid biosynthesis; L-histidine biosynthesis; L-histidine from 5-phospho-alpha-D-ribose 1-diphosphate: step 6/9. This chain is Imidazoleglycerol-phosphate dehydratase (PTH3), found in Pyricularia oryzae (strain 70-15 / ATCC MYA-4617 / FGSC 8958) (Rice blast fungus).